Here is a 335-residue protein sequence, read N- to C-terminus: Probable cytosolic iron-sulfur protein assembly protein Ciao1 (335 aa).

WD repeat units follow at residues 12–51, 57–96, 101–140, 146–185, 192–231, 250–289, and 301–335; these read GHKG…WSTK, GHKR…FECN, GHEN…EFEC, AHTQ…SDWD, SHTS…NDAG, QHSR…KRDE, and AHEQ…KVDD.

This sequence belongs to the WD repeat CIA1 family.

In terms of biological role, essential component of the cytosolic iron-sulfur (Fe/S) protein assembly machinery. Required for the maturation of extramitochondrial Fe/S proteins. This chain is Probable cytosolic iron-sulfur protein assembly protein Ciao1, found in Drosophila pseudoobscura pseudoobscura (Fruit fly).